Consider the following 1184-residue polypeptide: Nucleolar protein 6 (1184 aa).

Residues 1–10 (MGRIKEKESK) show a composition bias toward basic and acidic residues. Disordered regions lie at residues 1–42 (MGRI…NRVP) and 1133–1184 (REQR…NALC).

Belongs to the NRAP family. As to quaternary structure, part of the small subunit (SSU) processome, composed of more than 70 proteins and the RNA chaperone small nucleolar RNA (snoRNA) U3.

The protein localises to the nucleus. It is found in the nucleolus. Its subcellular location is the chromosome. Part of the small subunit (SSU) processome, first precursor of the small eukaryotic ribosomal subunit. During the assembly of the SSU processome in the nucleolus, many ribosome biogenesis factors, an RNA chaperone and ribosomal proteins associate with the nascent pre-rRNA and work in concert to generate RNA folding, modifications, rearrangements and cleavage as well as targeted degradation of pre-ribosomal RNA by the RNA exosome. In Drosophila virilis (Fruit fly), this protein is Nucleolar protein 6.